The chain runs to 539 residues: Glucose-6-phosphate isomerase (539 aa).

Glu349 functions as the Proton donor in the catalytic mechanism. Active-site residues include His380 and Lys508. The tract at residues 519–539 (ESGASGQHDPSTAGLIQRLKR) is disordered.

Belongs to the GPI family.

The protein localises to the cytoplasm. It catalyses the reaction alpha-D-glucose 6-phosphate = beta-D-fructose 6-phosphate. The protein operates within carbohydrate biosynthesis; gluconeogenesis. It participates in carbohydrate degradation; glycolysis; D-glyceraldehyde 3-phosphate and glycerone phosphate from D-glucose: step 2/4. Catalyzes the reversible isomerization of glucose-6-phosphate to fructose-6-phosphate. In Caulobacter vibrioides (strain ATCC 19089 / CIP 103742 / CB 15) (Caulobacter crescentus), this protein is Glucose-6-phosphate isomerase.